Consider the following 277-residue polypeptide: Ribosomal RNA small subunit methyltransferase A (277 aa).

The S-adenosyl-L-methionine site is built by asparagine 18, leucine 20, glycine 45, glutamate 66, aspartate 89, and asparagine 110.

Belongs to the class I-like SAM-binding methyltransferase superfamily. rRNA adenine N(6)-methyltransferase family. RsmA subfamily.

The protein resides in the cytoplasm. The enzyme catalyses adenosine(1518)/adenosine(1519) in 16S rRNA + 4 S-adenosyl-L-methionine = N(6)-dimethyladenosine(1518)/N(6)-dimethyladenosine(1519) in 16S rRNA + 4 S-adenosyl-L-homocysteine + 4 H(+). Functionally, specifically dimethylates two adjacent adenosines (A1518 and A1519) in the loop of a conserved hairpin near the 3'-end of 16S rRNA in the 30S particle. May play a critical role in biogenesis of 30S subunits. This Cupriavidus taiwanensis (strain DSM 17343 / BCRC 17206 / CCUG 44338 / CIP 107171 / LMG 19424 / R1) (Ralstonia taiwanensis (strain LMG 19424)) protein is Ribosomal RNA small subunit methyltransferase A.